Consider the following 318-residue polypeptide: Taste receptor type 2 member 60 (318 aa).

Residues 1–7 (MNGDHMV) are Extracellular-facing. Residues 8–28 (LGSSVTDKKAIILVTILLLLR) traverse the membrane as a helical segment. The Cytoplasmic segment spans residues 29–40 (LVAIAGNGFITA). The helical transmembrane segment at 41-61 (ALGVEWVLRRMLLPCDKLLVS) threads the bilayer. Residues 62–88 (LGASHFCLQSVVMGKTIYVFLYPMAFP) are Extracellular-facing. A helical membrane pass occupies residues 89-109 (YNPVLQFLAFQWDFLNAATLW). Residues 110–128 (FSTWLSVFYCVKIATFTHP) lie on the Cytoplasmic side of the membrane. A helical transmembrane segment spans residues 129–149 (VFFWLKHKLSGWLPWMVFSYV). Topologically, residues 150–183 (GLSSFTTILFFIGNHRMYQNYLKNHLQPWNVTGN) are extracellular. Asn-179 is a glycosylation site (N-linked (GlcNAc...) asparagine). A helical membrane pass occupies residues 184–204 (SIRSYCEKFYLFPLKMITWTM). Residues 205-234 (PTAVFFICMILLITSLGRHMKKALLTTSGF) lie on the Cytoplasmic side of the membrane. The chain crosses the membrane as a helical span at residues 235–255 (REPSVQAHIKALLALLSFAML). The Extracellular segment spans residues 256 to 264 (FISYFLSLV). The chain crosses the membrane as a helical span at residues 265 to 285 (FSAAGIFPPLDFKFWVWESVI). At 286–318 (YLCAAVHPIILLFSNCRLRAVLKSRRSSRCGTP) the chain is on the cytoplasmic side.

This sequence belongs to the G-protein coupled receptor T2R family.

It localises to the membrane. Its function is as follows. Receptor that may play a role in the perception of bitterness and is gustducin-linked. May play a role in sensing the chemical composition of the gastrointestinal content. The activity of this receptor may stimulate alpha gustducin, mediate PLC-beta-2 activation and lead to the gating of TRPM5. The protein is Taste receptor type 2 member 60 (TAS2R60) of Pan troglodytes (Chimpanzee).